Here is a 305-residue protein sequence, read N- to C-terminus: N-acetyl-D-glucosamine kinase (305 aa).

ATP is bound by residues 4-11 and 133-140; these read GFDIGGTK and GFGGGLVF. Zn(2+) contacts are provided by histidine 157, cysteine 178, cysteine 180, and cysteine 185.

Belongs to the ROK (NagC/XylR) family. NagK subfamily.

The catalysed reaction is N-acetyl-D-glucosamine + ATP = N-acetyl-D-glucosamine 6-phosphate + ADP + H(+). Its pathway is cell wall biogenesis; peptidoglycan recycling. Its function is as follows. Catalyzes the phosphorylation of N-acetyl-D-glucosamine (GlcNAc) derived from cell-wall degradation, yielding GlcNAc-6-P. This Histophilus somni (strain 129Pt) (Haemophilus somnus) protein is N-acetyl-D-glucosamine kinase.